We begin with the raw amino-acid sequence, 360 residues long: Phosphoserine aminotransferase (360 aa).

Residue arginine 41 coordinates L-glutamate. Pyridoxal 5'-phosphate contacts are provided by residues 75 to 76, tryptophan 101, threonine 151, aspartate 171, and glutamine 194; that span reads AS. Position 195 is an N6-(pyridoxal phosphate)lysine (lysine 195). 236-237 provides a ligand contact to pyridoxal 5'-phosphate; sequence NT.

It belongs to the class-V pyridoxal-phosphate-dependent aminotransferase family. SerC subfamily. In terms of assembly, homodimer. Pyridoxal 5'-phosphate serves as cofactor.

The protein localises to the cytoplasm. The enzyme catalyses O-phospho-L-serine + 2-oxoglutarate = 3-phosphooxypyruvate + L-glutamate. It carries out the reaction 4-(phosphooxy)-L-threonine + 2-oxoglutarate = (R)-3-hydroxy-2-oxo-4-phosphooxybutanoate + L-glutamate. The protein operates within amino-acid biosynthesis; L-serine biosynthesis; L-serine from 3-phospho-D-glycerate: step 2/3. It functions in the pathway cofactor biosynthesis; pyridoxine 5'-phosphate biosynthesis; pyridoxine 5'-phosphate from D-erythrose 4-phosphate: step 3/5. Its function is as follows. Catalyzes the reversible conversion of 3-phosphohydroxypyruvate to phosphoserine and of 3-hydroxy-2-oxo-4-phosphonooxybutanoate to phosphohydroxythreonine. This Herpetosiphon aurantiacus (strain ATCC 23779 / DSM 785 / 114-95) protein is Phosphoserine aminotransferase.